We begin with the raw amino-acid sequence, 338 residues long: DNA-directed RNA polymerase subunit alpha (338 aa).

The interval 1–233 (MYKNWRELIK…EQLQIFINFD (233 aa)) is alpha N-terminal domain (alpha-NTD). The alpha C-terminal domain (alpha-CTD) stretch occupies residues 250 to 338 (INENLYRSVE…KMIQEGKEDL (89 aa)).

Belongs to the RNA polymerase alpha chain family. Homodimer. The RNAP catalytic core consists of 2 alpha, 1 beta, 1 beta' and 1 omega subunit. When a sigma factor is associated with the core the holoenzyme is formed, which can initiate transcription.

It carries out the reaction RNA(n) + a ribonucleoside 5'-triphosphate = RNA(n+1) + diphosphate. DNA-dependent RNA polymerase catalyzes the transcription of DNA into RNA using the four ribonucleoside triphosphates as substrates. The protein is DNA-directed RNA polymerase subunit alpha of Syntrophotalea carbinolica (strain DSM 2380 / NBRC 103641 / GraBd1) (Pelobacter carbinolicus).